Consider the following 780-residue polypeptide: MTHEEHHAAKTLGIGKAIAVLTSGGDAQGMNAAVRAVVRVGIFTGARVFFVHEGYQGLVDGGDHIREATWESVSMMLQLGGTVIGSARCKDFREREGRLRAAHNLVKLGITNLCVIGGDGSLTGADTFRSEWSDLLSDLQKAGKITAEEATKSNYLNIVGLVGSIDNDFCGTDMTIGTDSALHRIIEIVDAITTTAQSHQRTFVLEVMGRHCGYLALVTSLSCGADWVFIPECPPDDDWEDHLCRRLSETRTRGSRLNIIIVAEGAIDRNGKPITSESIKDLVVKRLGYDTRVTVLGHVQRGGTPSAFDRILGSRMGVEAVMALLEATPDTPACVVSLSGNQAVRLPLMECVQVTKDVTKAMAERKFDEAMKLRGRSFMNNWEVYKLLAHIRPPVSKSGSHTVAVMNVGAPAAGMNAAVRSTVRIGLIQGNRVLVVHDGFEGLAKGRIEEAGWSYVGGWTGQGGSKLGTKRTLPRKSFEQISANITKFNIQGLIIVGGFEAYTGGLELMEGRKQYDELCIPFVVIPATVSNNVPGSDFSVGADTALNTICMTCDRIKQSAAGTKRRVFIIETMGGYCGYLATMAGLAAGADAAYIFEEPFTIRDLQVNVEHLVQKMKTTVKRGLVLRNEKCNENYSTDFIFNLYSEEGKGIFDSRKNVLGHMQQGGSPTPFDRNFATKMGAKAMNWMSGKIKESYRNGRIFANTPDSGCVLGMRKRALVFQPVTELKEQTDFEHRIPKEQWWLKLRPILKILAKYEIDLDTSEHAHLEHISRKRSGEAPA.

The residue at position 2 (threonine 2) is an N-acetylthreonine. The tract at residues 2 to 390 (THEEHHAAKT…NWEVYKLLAH (389 aa)) is N-terminal catalytic PFK domain 1. ATP is bound by residues glycine 25, 88-89 (RC), and 118-121 (GDGS). Aspartate 119 provides a ligand contact to Mg(2+). A Phosphoserine modification is found at serine 133. Residues 164–166 (SID), arginine 201, 208–210 (MGR), glutamate 264, arginine 292, and 298–301 (HVQR) contribute to the substrate site. Aspartate 166 functions as the Proton acceptor in the catalytic mechanism. Serine 377 carries the phosphoserine modification. Positions 391–401 (IRPPVSKSGSH) are interdomain linker. Positions 402-780 (TVAVMNVGAP…SRKRSGEAPA (379 aa)) are C-terminal regulatory PFK domain 2. Beta-D-fructose 2,6-bisphosphate is bound by residues arginine 471 and 528-532 (TVSNN). A glycan (O-linked (GlcNAc) serine) is linked at serine 530. Lysine 557 bears the N6-(2-hydroxyisobutyryl)lysine mark. Beta-D-fructose 2,6-bisphosphate contacts are provided by residues arginine 566, 573 to 575 (MGG), glutamate 629, arginine 655, and 661 to 664 (HMQQ). Serine 667 bears the Phosphoserine mark. Beta-D-fructose 2,6-bisphosphate is bound at residue arginine 735. Residue serine 775 is modified to Phosphoserine.

This sequence belongs to the phosphofructokinase type A (PFKA) family. ATP-dependent PFK group I subfamily. Eukaryotic two domain clade 'E' sub-subfamily. As to quaternary structure, homo- and heterotetramers. Phosphofructokinase (PFK) enzyme functions as a tetramer composed of different combinations of 3 types of subunits, called PFKM (M), PFKL (L) and PFKP (P). The composition of the PFK tetramer differs according to the tissue type it is present in. The kinetic and regulatory properties of the tetrameric enzyme are dependent on the subunit composition, hence can vary across tissues. Interacts (via C-terminus) with HK1 (via N-terminal spermatogenic cell-specific region). It depends on Mg(2+) as a cofactor. In terms of processing, glcNAcylation decreases enzyme activity.

It localises to the cytoplasm. The catalysed reaction is beta-D-fructose 6-phosphate + ATP = beta-D-fructose 1,6-bisphosphate + ADP + H(+). Its pathway is carbohydrate degradation; glycolysis; D-glyceraldehyde 3-phosphate and glycerone phosphate from D-glucose: step 3/4. Its activity is regulated as follows. Allosterically activated by ADP, AMP, or fructose 2,6-bisphosphate, and allosterically inhibited by ATP or citrate. Catalyzes the phosphorylation of D-fructose 6-phosphate to fructose 1,6-bisphosphate by ATP, the first committing step of glycolysis. The sequence is that of ATP-dependent 6-phosphofructokinase, muscle type (PFKM) from Equus caballus (Horse).